The following is a 130-amino-acid chain: Small ribosomal subunit protein uS11 (130 aa).

The protein belongs to the universal ribosomal protein uS11 family. In terms of assembly, part of the 30S ribosomal subunit. Interacts with proteins S7 and S18. Binds to IF-3.

In terms of biological role, located on the platform of the 30S subunit, it bridges several disparate RNA helices of the 16S rRNA. Forms part of the Shine-Dalgarno cleft in the 70S ribosome. This chain is Small ribosomal subunit protein uS11, found in Shewanella baltica (strain OS223).